The sequence spans 1414 residues: Alpha-(1-&gt;3)-arabinofuranosyltransferase (1414 aa).

9 helical membrane-spanning segments follow: residues 57–77, 81–101, 128–148, 167–187, 203–223, 273–293, 302–322, 352–372, and 389–409; these read YLFP…PGWV, LWWA…AEAL, AISS…PVIL, VALM…AAVI, AWWL…LLML, STTA…GLAL, LITM…GGLG, LPLA…GSAP, and VAVA…AWTA. One can recognise an F5/8 type C domain in the interval 687 to 845; it reads YPSDGADLVY…QYDASGFAHP (159 aa). 4 helical membrane-spanning segments follow: residues 1253–1273, 1297–1317, 1333–1353, and 1364–1384; these read VGLI…LIPV, ALVA…GAAM, VWDN…GSVL, and YVGH…FLAA. Residues 1393 to 1414 form a disordered region; it reads PEPSEDGRSAKPEHTGASAHAG. The segment covering 1394-1406 has biased composition (basic and acidic residues); sequence EPSEDGRSAKPEH.

Its subcellular location is the membrane. It carries out the reaction Adds an alpha-D-arabinofuranosyl group from trans,octacis-decaprenylphospho-beta-D-arabinofuranose at the 3-O-position of an alpha-(1-&gt;5)-arabinofuranan chain attached to a beta-(1-&gt;5)-galactofuranan chain.. It participates in cell wall biogenesis; cell wall polysaccharide biosynthesis. Involved in the biosynthesis of the arabinogalactan (AG) region of the mycolylarabinogalactan-peptidoglycan (mAGP) complex, an essential component of the mycobacterial cell wall. Catalyzes the addition of an arabinofuranosyl (Araf) residue from the sugar donor decaprenyl-phospho-arabinose (DPA) on the C-3 of an alpha-(1-&gt;5)-linked Araf from the arabinan backbone of AG. The polypeptide is Alpha-(1-&gt;3)-arabinofuranosyltransferase (aftD) (Mycolicibacterium smegmatis (strain ATCC 700084 / mc(2)155) (Mycobacterium smegmatis)).